The sequence spans 544 residues: Peptide chain release factor 3 (544 aa).

The region spanning 17 to 286 (EKRRNFAIIS…SFLDYGLAPR (270 aa)) is the tr-type G domain. GTP-binding positions include 26–33 (SHPDAGKT), 94–98 (DTPGH), and 148–151 (NKMD).

This sequence belongs to the TRAFAC class translation factor GTPase superfamily. Classic translation factor GTPase family. PrfC subfamily.

It is found in the cytoplasm. Functionally, increases the formation of ribosomal termination complexes and stimulates activities of RF-1 and RF-2. It binds guanine nucleotides and has strong preference for UGA stop codons. It may interact directly with the ribosome. The stimulation of RF-1 and RF-2 is significantly reduced by GTP and GDP, but not by GMP. This Microcystis aeruginosa (strain NIES-843 / IAM M-2473) protein is Peptide chain release factor 3.